The chain runs to 161 residues: Regulator of ribonuclease activity A (161 aa).

This sequence belongs to the RraA family. Homotrimer. Binds to both RNA-binding sites in the C-terminal region of Rne and to RhlB.

Its subcellular location is the cytoplasm. In terms of biological role, globally modulates RNA abundance by binding to RNase E (Rne) and regulating its endonucleolytic activity. Can modulate Rne action in a substrate-dependent manner by altering the composition of the degradosome. Modulates RNA-binding and helicase activities of the degradosome. This is Regulator of ribonuclease activity A from Idiomarina loihiensis (strain ATCC BAA-735 / DSM 15497 / L2-TR).